Reading from the N-terminus, the 281-residue chain is uncharacterized protein (281 aa).

Residues 1 to 30 (MVQIQFHQGEPLGHKKEKPPPVSPPSPPPI) form a disordered region. Over residues 20–30 (PPVSPPSPPPI) the composition is skewed to pro residues. The next 7 membrane-spanning stretches (helical) occupy residues 58-78 (TVVF…LIPW), 88-107 (TLPF…AYWL), 117-137 (MLVM…GLCF), 145-165 (AYVL…LMAW), 171-191 (LAIL…IAVQ), 196-216 (YQRI…IVLI), and 248-268 (VIMF…PNYA).

This sequence belongs to the cytomegalovirus US12 family.

The protein localises to the host membrane. This is an uncharacterized protein from Homo sapiens (Human).